Consider the following 243-residue polypeptide: Carboxy-S-adenosyl-L-methionine synthase (243 aa).

Residues Tyr-35, 68–70 (GCS), 92–93 (DN), and Arg-199 each bind S-adenosyl-L-methionine.

It belongs to the class I-like SAM-binding methyltransferase superfamily. Cx-SAM synthase family. As to quaternary structure, homodimer.

The enzyme catalyses prephenate + S-adenosyl-L-methionine = carboxy-S-adenosyl-L-methionine + 3-phenylpyruvate + H2O. In terms of biological role, catalyzes the conversion of S-adenosyl-L-methionine (SAM) to carboxy-S-adenosyl-L-methionine (Cx-SAM). The protein is Carboxy-S-adenosyl-L-methionine synthase of Helicobacter pylori (strain P12).